A 319-amino-acid polypeptide reads, in one-letter code: Alpha-hemolysin (319 aa).

The N-terminal stretch at 1 to 26 (MKTRIVSSVTTTLLLGSILMNPVAGA) is a signal peptide.

This sequence belongs to the aerolysin family. As to quaternary structure, self-assembles to first form a non-lytic oligomeric intermediate, and then, a mushroom-shaped homoheptamer structure of 100 Angstroms in length and up to 100 Angstroms in diameter. Interacts with human ADAM10; this interaction is required for toxin pore formation, disruption of focal adhesions, and hly-mediated cytotoxicity.

It is found in the secreted. Functionally, alpha-toxin binds to the membrane of eukaryotic cells (particularly red blood cells, RBC) forming pores, resulting in hemolysis, with the release of low-molecular weight molecules leading to eventual osmotic RBC lysis. Human RBCs bind much less alpha-toxin than do rabbit RBCs. Heptamer oligomerization and pore formation is required for lytic activity. The chain is Alpha-hemolysin (hly) from Staphylococcus aureus.